Consider the following 204-residue polypeptide: GTP cyclohydrolase-2 (204 aa).

Arg49 to Glu53 lines the GTP pocket. Residues Cys54, Cys65, and Cys67 each contribute to the Zn(2+) site. GTP is bound by residues Gln70, Glu92–Arg94, and Thr114. Catalysis depends on Asp126, which acts as the Proton acceptor. Arg128 serves as the catalytic Nucleophile. Positions 149 and 154 each coordinate GTP.

This sequence belongs to the GTP cyclohydrolase II family. Zn(2+) is required as a cofactor.

It carries out the reaction GTP + 4 H2O = 2,5-diamino-6-hydroxy-4-(5-phosphoribosylamino)-pyrimidine + formate + 2 phosphate + 3 H(+). It participates in cofactor biosynthesis; riboflavin biosynthesis; 5-amino-6-(D-ribitylamino)uracil from GTP: step 1/4. Catalyzes the conversion of GTP to 2,5-diamino-6-ribosylamino-4(3H)-pyrimidinone 5'-phosphate (DARP), formate and pyrophosphate. This is GTP cyclohydrolase-2 from Shewanella baltica (strain OS223).